Here is a 519-residue protein sequence, read N- to C-terminus: 2,3-bisphosphoglycerate-independent phosphoglycerate mutase (519 aa).

Mn(2+) is bound by residues D18 and S68. Catalysis depends on S68, which acts as the Phosphoserine intermediate. Substrate-binding positions include H129, 159 to 160 (RD), R191, R197, 267 to 270 (RADR), and K341. Residues D408, H412, D449, H450, and H468 each coordinate Mn(2+).

This sequence belongs to the BPG-independent phosphoglycerate mutase family. As to quaternary structure, monomer. The cofactor is Mn(2+).

The catalysed reaction is (2R)-2-phosphoglycerate = (2R)-3-phosphoglycerate. It functions in the pathway carbohydrate degradation; glycolysis; pyruvate from D-glyceraldehyde 3-phosphate: step 3/5. In terms of biological role, catalyzes the interconversion of 2-phosphoglycerate and 3-phosphoglycerate. The polypeptide is 2,3-bisphosphoglycerate-independent phosphoglycerate mutase (Coxiella burnetii (strain RSA 331 / Henzerling II)).